A 115-amino-acid polypeptide reads, in one-letter code: Iron-sulfur cluster insertion protein ErpA (115 aa).

Positions 42, 106, and 108 each coordinate iron-sulfur cluster.

Belongs to the HesB/IscA family. In terms of assembly, homodimer. The cofactor is iron-sulfur cluster.

In terms of biological role, required for insertion of 4Fe-4S clusters for at least IspG. The protein is Iron-sulfur cluster insertion protein ErpA of Baumannia cicadellinicola subsp. Homalodisca coagulata.